A 429-amino-acid chain; its full sequence is Glutamate-1-semialdehyde 2,1-aminomutase (429 aa).

Lys-267 bears the N6-(pyridoxal phosphate)lysine mark.

Belongs to the class-III pyridoxal-phosphate-dependent aminotransferase family. HemL subfamily. Homodimer. Pyridoxal 5'-phosphate is required as a cofactor.

The protein localises to the cytoplasm. It carries out the reaction (S)-4-amino-5-oxopentanoate = 5-aminolevulinate. Its pathway is porphyrin-containing compound metabolism; protoporphyrin-IX biosynthesis; 5-aminolevulinate from L-glutamyl-tRNA(Glu): step 2/2. This is Glutamate-1-semialdehyde 2,1-aminomutase from Stenotrophomonas maltophilia (strain K279a).